A 296-amino-acid chain; its full sequence is Glycerol-3-phosphate dehydrogenase [NAD(P)+] (296 aa).

Tryptophan 12, arginine 31, and lysine 80 together coordinate NADPH. 3 residues coordinate sn-glycerol 3-phosphate: lysine 80, glycine 108, and serine 110. Residue alanine 112 participates in NADPH binding. Positions 162, 215, 225, 226, and 227 each coordinate sn-glycerol 3-phosphate. The active-site Proton acceptor is the lysine 162. Position 226 (arginine 226) interacts with NADPH. The NADPH site is built by valine 250 and glutamate 252.

The protein belongs to the NAD-dependent glycerol-3-phosphate dehydrogenase family.

It localises to the cytoplasm. It catalyses the reaction sn-glycerol 3-phosphate + NAD(+) = dihydroxyacetone phosphate + NADH + H(+). It carries out the reaction sn-glycerol 3-phosphate + NADP(+) = dihydroxyacetone phosphate + NADPH + H(+). It participates in membrane lipid metabolism; glycerophospholipid metabolism. Catalyzes the reduction of the glycolytic intermediate dihydroxyacetone phosphate (DHAP) to sn-glycerol 3-phosphate (G3P), the key precursor for phospholipid synthesis. In Sulfurimonas denitrificans (strain ATCC 33889 / DSM 1251) (Thiomicrospira denitrificans (strain ATCC 33889 / DSM 1251)), this protein is Glycerol-3-phosphate dehydrogenase [NAD(P)+].